The primary structure comprises 103 residues: Small ribosomal subunit protein uS10 (103 aa).

The protein belongs to the universal ribosomal protein uS10 family. Part of the 30S ribosomal subunit.

Functionally, involved in the binding of tRNA to the ribosomes. This Acidovorax sp. (strain JS42) protein is Small ribosomal subunit protein uS10.